We begin with the raw amino-acid sequence, 552 residues long: Chromosomal replication initiator protein DnaA (552 aa).

The interval 1-90 is domain I, interacts with DnaA modulators; the sequence is MWNETWNEIT…FTVAVTVDPT (90 aa). Positions 90–210 are domain II; the sequence is TLDVIQDLPH…KPAHDPDRNG (121 aa). A disordered region spans residues 113 to 213; that stretch reads EHPHYSPVSQ…HDPDRNGSLN (101 aa). Over residues 155-170 the composition is skewed to low complexity; the sequence is PQPSQSSQSAQQQPAQ. The segment at 211 to 427 is domain III, AAA+ region; it reads SLNPRYTFDT…GAFIRVSAYA (217 aa). Positions 255, 257, 258, and 259 each coordinate ATP. The segment at 428–552 is domain IV, binds dsDNA; sequence SLNEAPINMA…TQQIKSSDRA (125 aa).

Belongs to the DnaA family. Oligomerizes as a right-handed, spiral filament on DNA at oriC.

The protein localises to the cytoplasm. Functionally, plays an essential role in the initiation and regulation of chromosomal replication. ATP-DnaA binds to the origin of replication (oriC) to initiate formation of the DNA replication initiation complex once per cell cycle. Binds the DnaA box (a 9 base pair repeat at the origin) and separates the double-stranded (ds)DNA. Forms a right-handed helical filament on oriC DNA; dsDNA binds to the exterior of the filament while single-stranded (ss)DNA is stabiized in the filament's interior. The ATP-DnaA-oriC complex binds and stabilizes one strand of the AT-rich DNA unwinding element (DUE), permitting loading of DNA polymerase. After initiation quickly degrades to an ADP-DnaA complex that is not apt for DNA replication. Binds acidic phospholipids. This is Chromosomal replication initiator protein DnaA from Corynebacterium diphtheriae (strain ATCC 700971 / NCTC 13129 / Biotype gravis).